Here is a 427-residue protein sequence, read N- to C-terminus: Adenylosuccinate synthetase (427 aa).

Residues Gly12 to Lys18 and Gly40 to Thr42 contribute to the GTP site. The active-site Proton acceptor is the Asp13. The Mg(2+) site is built by Asp13 and Gly40. IMP-binding positions include Asp13–Lys16, Asn38–His41, Thr128, Arg142, Gln223, Thr238, and Arg302. His41 acts as the Proton donor in catalysis. Val298–Arg304 lines the substrate pocket. GTP is bound by residues Arg304, Lys330–Asp332, and Gly412–Gly414.

It belongs to the adenylosuccinate synthetase family. In terms of assembly, homodimer. Mg(2+) is required as a cofactor.

Its subcellular location is the cytoplasm. It catalyses the reaction IMP + L-aspartate + GTP = N(6)-(1,2-dicarboxyethyl)-AMP + GDP + phosphate + 2 H(+). It participates in purine metabolism; AMP biosynthesis via de novo pathway; AMP from IMP: step 1/2. Plays an important role in the de novo pathway of purine nucleotide biosynthesis. Catalyzes the first committed step in the biosynthesis of AMP from IMP. This chain is Adenylosuccinate synthetase, found in Frankia casuarinae (strain DSM 45818 / CECT 9043 / HFP020203 / CcI3).